We begin with the raw amino-acid sequence, 592 residues long: Threonine--tRNA ligase (592 aa).

Residues 193–488 (DHRKLGPALG…LIEHYGGAFP (296 aa)) are catalytic. Zn(2+) contacts are provided by cysteine 284, histidine 335, and histidine 465.

Belongs to the class-II aminoacyl-tRNA synthetase family. In terms of assembly, homodimer. Requires Zn(2+) as cofactor.

Its subcellular location is the cytoplasm. It carries out the reaction tRNA(Thr) + L-threonine + ATP = L-threonyl-tRNA(Thr) + AMP + diphosphate + H(+). In terms of biological role, catalyzes the attachment of threonine to tRNA(Thr) in a two-step reaction: L-threonine is first activated by ATP to form Thr-AMP and then transferred to the acceptor end of tRNA(Thr). Also edits incorrectly charged L-seryl-tRNA(Thr). This Treponema pallidum (strain Nichols) protein is Threonine--tRNA ligase.